The sequence spans 112 residues: Small ribosomal subunit protein bS6 (112 aa).

Belongs to the bacterial ribosomal protein bS6 family.

Functionally, binds together with bS18 to 16S ribosomal RNA. The chain is Small ribosomal subunit protein bS6 (rpsF) from Chlamydia muridarum (strain MoPn / Nigg).